A 245-amino-acid chain; its full sequence is Probable phosphatase YpAngola_A2446 (245 aa).

Zn(2+) is bound by residues H7, H9, H15, H40, E73, H101, H131, D192, and H194.

The protein belongs to the PHP family. As to quaternary structure, homotrimer. It depends on Zn(2+) as a cofactor.

This Yersinia pestis bv. Antiqua (strain Angola) protein is Probable phosphatase YpAngola_A2446.